The chain runs to 121 residues: Large ribosomal subunit protein bL20 (121 aa).

Belongs to the bacterial ribosomal protein bL20 family.

In terms of biological role, binds directly to 23S ribosomal RNA and is necessary for the in vitro assembly process of the 50S ribosomal subunit. It is not involved in the protein synthesizing functions of that subunit. This Chlamydia felis (strain Fe/C-56) (Chlamydophila felis) protein is Large ribosomal subunit protein bL20.